A 592-amino-acid polypeptide reads, in one-letter code: Nuclear rim protein 1 (592 aa).

A run of 2 helical transmembrane segments spans residues 151-171 (FLNV…LFVA) and 255-275 (ALFS…EVSF). Residues 547–592 (FEITASRDLPAGRSSAVSSRHSSISPFKGNTSFAGRESLDSRPPFR) are disordered. Residues 560-571 (SSAVSSRHSSIS) show a composition bias toward low complexity.

This sequence belongs to the NUR1 family.

Its subcellular location is the nucleus membrane. Member of a perinuclear network that controls recombination at multiple loci to maintain genome stability. Required for rDNA repeat stability. This is Nuclear rim protein 1 (NUR1) from Lachancea thermotolerans (strain ATCC 56472 / CBS 6340 / NRRL Y-8284) (Yeast).